The chain runs to 456 residues: UPF0496 protein 4 (456 aa).

Residues 205-221 traverse the membrane as a helical segment; that stretch reads SVTVFVCSIFVAVLSGS.

The protein belongs to the ROH1 family.

It localises to the membrane. In Oryza sativa subsp. indica (Rice), this protein is UPF0496 protein 4.